A 423-amino-acid polypeptide reads, in one-letter code: Pre-mRNA-splicing regulator WTAP (423 aa).

The interval 234-423 (QQLSQMNQTQ…TSNASAGSVL (190 aa)) is disordered. Polar residues-rich tracts occupy residues 239–276 (MNQT…SSNV), 285–301 (NGPS…SGSS), 358–377 (DSPT…TDSN), and 392–404 (TAGT…NGLD). Low complexity predominate over residues 405-423 (SSAAAVATNTSNASAGSVL).

The protein belongs to the fl(2)d family. In terms of assembly, component of the WMM complex, a N6-methyltransferase complex composed of a catalytic subcomplex, named MAC, and of an associated subcomplex, named MACOM. Component of the MACOM subcomplex.

The protein localises to the nucleus speckle. It is found in the nucleus. It localises to the nucleoplasm. Its function is as follows. Associated component of the WMM complex, a complex that mediates N6-methyladenosine (m6A) methylation of RNAs, a modification that plays a role in the efficiency of mRNA splicing and RNA processing. The protein is Pre-mRNA-splicing regulator WTAP of Danio rerio (Zebrafish).